The chain runs to 645 residues: Aminopeptidase P1 (645 aa).

At S2 the chain carries N-acetylserine. R69 and H420 together coordinate a peptide. Residues D440, D451, and H514 each coordinate Mn(2+). A peptide-binding residues include H514, H523, and E549. Positions 549 and 563 each coordinate Mn(2+).

Belongs to the peptidase M24B family. In terms of assembly, homodimer. Interacts with N-1-naphthylphthalamic acid (NPA). Mn(2+) is required as a cofactor. It depends on Zn(2+) as a cofactor. Glycosylated. Also present in a non-glycosylated form. Ubiquitous with preferential expression in 5 days-old seedlings, roots, flowers, inflorescences and rosette leaves (at protein levels).

The protein localises to the cytoplasm. It localises to the cell membrane. It is found in the microsome membrane. It carries out the reaction Release of any N-terminal amino acid, including proline, that is linked to proline, even from a dipeptide or tripeptide.. Inhibited by EGTA and apstatin, and, to some extent, by the flavonoid kaempferol. In terms of biological role, catalyzes the removal of a penultimate prolyl residue from the N-termini of peptides, such as Arg-Pro-Pro. Aminopeptidase that binds to the auxin transport inhibitor N-1-naphthylphthalamic acid (NPA). May play a negative role in the regulation of PIN auxin transport proteins. The sequence is that of Aminopeptidase P1 from Arabidopsis thaliana (Mouse-ear cress).